The following is a 245-amino-acid chain: 1-(5-phosphoribosyl)-5-[(5-phosphoribosylamino)methylideneamino] imidazole-4-carboxamide isomerase (245 aa).

Residue aspartate 7 is the Proton acceptor of the active site. Aspartate 129 functions as the Proton donor in the catalytic mechanism.

It belongs to the HisA/HisF family.

The protein resides in the cytoplasm. It carries out the reaction 1-(5-phospho-beta-D-ribosyl)-5-[(5-phospho-beta-D-ribosylamino)methylideneamino]imidazole-4-carboxamide = 5-[(5-phospho-1-deoxy-D-ribulos-1-ylimino)methylamino]-1-(5-phospho-beta-D-ribosyl)imidazole-4-carboxamide. Its pathway is amino-acid biosynthesis; L-histidine biosynthesis; L-histidine from 5-phospho-alpha-D-ribose 1-diphosphate: step 4/9. The polypeptide is 1-(5-phosphoribosyl)-5-[(5-phosphoribosylamino)methylideneamino] imidazole-4-carboxamide isomerase (Salmonella heidelberg (strain SL476)).